A 328-amino-acid chain; its full sequence is Tryptophan--tRNA ligase (328 aa).

ATP contacts are provided by residues 9-11 (QPS) and 17-18 (GN). Positions 10 to 18 (PSGVITIGN) match the 'HIGH' region motif. Aspartate 132 is a binding site for L-tryptophan. ATP contacts are provided by residues 144 to 146 (GED), isoleucine 183, and 192 to 196 (KMSKS). The short motif at 192 to 196 (KMSKS) is the 'KMSKS' region element.

It belongs to the class-I aminoacyl-tRNA synthetase family. Homodimer.

The protein localises to the cytoplasm. The catalysed reaction is tRNA(Trp) + L-tryptophan + ATP = L-tryptophyl-tRNA(Trp) + AMP + diphosphate + H(+). With respect to regulation, inhibited by indolmycin, a competitive inhibitor for tryptophan. In terms of biological role, catalyzes the attachment of tryptophan to tRNA(Trp). This Geobacillus stearothermophilus (Bacillus stearothermophilus) protein is Tryptophan--tRNA ligase.